Consider the following 306-residue polypeptide: ATP synthase gamma chain (306 aa).

Belongs to the ATPase gamma chain family. F-type ATPases have 2 components, CF(1) - the catalytic core - and CF(0) - the membrane proton channel. CF(1) has five subunits: alpha(3), beta(3), gamma(1), delta(1), epsilon(1). CF(0) has three main subunits: a, b and c.

The protein localises to the cell membrane. In terms of biological role, produces ATP from ADP in the presence of a proton gradient across the membrane. The gamma chain is believed to be important in regulating ATPase activity and the flow of protons through the CF(0) complex. This Bifidobacterium animalis subsp. lactis (strain AD011) protein is ATP synthase gamma chain.